The primary structure comprises 438 residues: uncharacterized protein (438 aa).

Lys273 is subject to N6-(pyridoxal phosphate)lysine.

This sequence belongs to the class-III pyridoxal-phosphate-dependent aminotransferase family. Requires pyridoxal 5'-phosphate as cofactor.

It is found in the mitochondrion. This is an uncharacterized protein from Schizosaccharomyces pombe (strain 972 / ATCC 24843) (Fission yeast).